A 420-amino-acid chain; its full sequence is Trichothecene biosynthesis transcription regulator TRI10 (420 aa).

The protein belongs to the TRI10 transcription regulator family.

It is found in the nucleus. Transcriptional activator of all of the trichothecene biosynthesis genes. Acts upstream of the cluster-encoded transcription factor TRI6 and is necessary for full expression of both the other trichothecene genes and the genes for the primary metabolic pathway that precedes the trichothecene biosynthetic pathway. The sequence is that of Trichothecene biosynthesis transcription regulator TRI10 from Fusarium sporotrichioides.